Reading from the N-terminus, the 959-residue chain is DEAD-box ATP-dependent RNA helicase rde-12 (959 aa).

The tract at residues 1–336 (MSSFGNNAGG…EGVNAPVRAP (336 aa)) is disordered. Residues 71-97 (GRREDDRSHSRDNHGGSRYGERDDRGN) show a composition bias toward basic and acidic residues. Positions 98-118 (NGRSADNRYSQSNYNYDSNRG) are enriched in polar residues. A compositionally biased stretch (basic and acidic residues) spans 122–134 (YQRDNHGSKDDRG). Positions 137–160 (NQYNDHGSNHNSNSRNDQYRQGSY) are enriched in polar residues. Basic and acidic residues-rich tracts occupy residues 166 to 181 (SGYRRDDDRRRNDNDQ) and 189 to 201 (RDSDRNSPRDHHN). Residues 202–213 (YNSQSSPRSHQG) are compositionally biased toward polar residues. 2 stretches are compositionally biased toward basic and acidic residues: residues 219-239 (SAPKEDNQRRYDNHQGGHDSY) and 255-270 (YRNDYRSQQDSRDHRS). Positions 271–280 (GGNNSSSGFK) are enriched in low complexity. Gly residues predominate over residues 281–301 (NDGGFGGNDNRGFGNNGGGSF). Positions 302 to 317 (GNPNNSYRGNSNNIGG) are enriched in low complexity. Positions 380–408 (TSWTNSGLHPTILETLKRIKYNNVRTIQG) match the Q motif motif. Residues 411 to 599 (IPQVLDGHDV…NELMKRLPGQ (189 aa)) enclose the Helicase ATP-binding domain. An ATP-binding site is contributed by 424–431 (AETSAGKT). A DEAD box motif is present at residues 539–542 (DEAD). One can recognise a Helicase C-terminal domain in the interval 632-792 (KLREILKQNV…KVPDFLDAMA (161 aa)). 2 disordered regions span residues 793-834 (KSSR…GGGR) and 858-959 (GGGG…DDEW). Gly residues-rich tracts occupy residues 800 to 834 (GTSGFGQRGGYGGRGGGFGGTGRGRGGGVFGGGGR) and 858 to 872 (GGGGFGGVKPSGFGG). Residues 930-941 (TLGSSTFGTANN) show a composition bias toward polar residues. The span at 942–959 (ADEEPTETGADGNDDDEW) shows a compositional bias: acidic residues.

The protein belongs to the DEAD box helicase family. DDX3/DED1 subfamily. Interacts with wago-1, ergo-1 and rde-1. Requires Mg(2+) as cofactor. In terms of tissue distribution, expressed in the soma and germline.

The protein resides in the cytoplasm. It is found in the perinuclear region. Its subcellular location is the cytoplasmic granule. The protein localises to the P-body. It carries out the reaction ATP + H2O = ADP + phosphate + H(+). Probable ATP-dependent RNA helicase involved in RNAi-mediated gene silencing. Specifically required in the endogenous siRNA pathway for biogenesis of secondary endogenous small interfering RNA (siRNA) intermediates called 22G-RNAs. May associate with and recruit rde-10 to primary siRNA-targeted mRNA for secondary siRNA synthesis. May be recruited to target mRNAs by rde-1 and/or ergo-1. This Caenorhabditis elegans protein is DEAD-box ATP-dependent RNA helicase rde-12.